Consider the following 515-residue polypeptide: Glucose-6-phosphate 1-dehydrogenase (515 aa).

Residue alanine 2 is modified to N-acetylalanine. Phosphoserine is present on serine 8. Position 10 is a phosphothreonine (threonine 10). Phenylalanine 26 carries the post-translational modification Phosphoserine. Residues glycine 38–lysine 45 and arginine 72 contribute to the NADP(+) site. At lysine 89 the chain carries N6-acetyllysine. Positions 147 and 171 each coordinate NADP(+). Residues lysine 171, histidine 201–lysine 205, glutamate 239, and aspartate 258 contribute to the D-glucose 6-phosphate site. At lysine 171 the chain carries N6-(2-hydroxyisobutyryl)lysine; alternate. An N6-acetyllysine; alternate modification is found at lysine 171. The Proton acceptor role is filled by histidine 263. Arginine 357 contacts NADP(+). Residues lysine 360 and arginine 365 each contribute to the D-glucose 6-phosphate site. Positions 366, 370, and 393 each coordinate NADP(+). Residue glutamine 395 coordinates D-glucose 6-phosphate. NADP(+)-binding positions include tyrosine 401–lysine 403 and aspartate 421–threonine 423. Lysine 403 carries the N6-acetyllysine modification. The residue at position 432 (lysine 432) is an N6-acetyllysine. Arginine 487 serves as a coordination point for NADP(+). Lysine 497 is subject to N6-acetyllysine. Positions 503 and 509 each coordinate NADP(+). The residue at position 503 (tyrosine 503) is a Phosphotyrosine.

The protein belongs to the glucose-6-phosphate dehydrogenase family. Homotetramer; dimer of dimers. Interacts with SIRT2; the interaction is enhanced by H(2)O(2) treatment. Forms a ternary complex with ALDOB and TP53; this interaction is direct. ALDOB stabilizes the complex inhibiting G6PD activity and keeping oxidative pentose phosphate metabolism in check. Acetylated by ELP3 at Lys-403; acetylation inhibits its homodimerization and enzyme activity. Deacetylated by SIRT2 at Lys-403; deacetylation stimulates its enzyme activity. As to expression, isoform Long is found in lymphoblasts, granulocytes and sperm.

It localises to the cytoplasm. It is found in the cytosol. Its subcellular location is the membrane. It carries out the reaction D-glucose 6-phosphate + NADP(+) = 6-phospho-D-glucono-1,5-lactone + NADPH + H(+). It participates in carbohydrate degradation; pentose phosphate pathway; D-ribulose 5-phosphate from D-glucose 6-phosphate (oxidative stage): step 1/3. In terms of biological role, catalyzes the rate-limiting step of the oxidative pentose-phosphate pathway, which represents a route for the dissimilation of carbohydrates besides glycolysis. The main function of this enzyme is to provide reducing power (NADPH) and pentose phosphates for fatty acid and nucleic acid synthesis. This is Glucose-6-phosphate 1-dehydrogenase (G6PD) from Homo sapiens (Human).